Consider the following 455-residue polypeptide: Golgi pH regulator (455 aa).

5 helical membrane passes run 5 to 25 (IDSSIMITSQILFFGFGWLFF), 46 to 66 (VTFAFSCTMFELIIFEILGVL), 79 to 99 (LCVILLILVFMVPFYIGYFIV), 114 to 134 (CLLWLTFMYFFWKLGDPFPIL), and 150 to 170 (VGVIGVTLMALLSGFGAVNCP). Asn-180 carries N-linked (GlcNAc...) asparagine glycosylation. The next 4 helical transmembrane spans lie at 288 to 308 (FLGYFFSIYCVWKIFMATINI), 343 to 363 (ISFILVGIIIVTSIRGLLITL), 378 to 398 (VIVLLLAQIMGMYFVSSVLLI), and 425 to 445 (WFDVIFLVSALSSILFLYLAH).

Belongs to the Golgi pH regulator (TC 1.A.38) family. In terms of assembly, homotrimer. Interacts with RABL3; the interaction stabilizes GPR89.

It is found in the golgi apparatus membrane. It carries out the reaction iodide(out) = iodide(in). The enzyme catalyses chloride(in) = chloride(out). The catalysed reaction is bromide(in) = bromide(out). It catalyses the reaction fluoride(in) = fluoride(out). Voltage-gated channel that enables the transfer of monoatomic anions such as iodide, chloride, bromide and fluoride which may function in counter-ion conductance and participates in Golgi acidification. Plays a role in lymphocyte development, probably by acting as a RABL3 effector in hematopoietic cells. This Mus musculus (Mouse) protein is Golgi pH regulator.